Consider the following 852-residue polypeptide: Translation initiation factor IF-2 (852 aa).

The disordered stretch occupies residues 1–240 (MEDKNKTIKE…KTSSDKRDFS (240 aa)). Positions 78-90 (KEVKYEESSRKQD) are enriched in basic and acidic residues. The segment covering 106–120 (VRPSGDSSYPVSRSP) has biased composition (polar residues). The segment covering 150–200 (RGPGQGGGYQGNRGPGQGGGYQGNRGPGQQTGPGNRFGGSGPGNRSGGPGG) has biased composition (gly residues). Positions 227 to 240 (HDKEKTSSDKRDFS) are enriched in basic and acidic residues. Positions 347–516 (NRPPVVTIMG…LLQAEVMDLK (170 aa)) constitute a tr-type G domain. Residues 356 to 363 (GHVDHGKT) are G1. 356–363 (GHVDHGKT) lines the GTP pocket. The G2 stretch occupies residues 381-385 (GITQH). Residues 402-405 (DTPG) form a G3 region. Residues 402–406 (DTPGH) and 456–459 (NKID) contribute to the GTP site. Positions 456-459 (NKID) are G4. The interval 492–494 (SAR) is G5.

Belongs to the TRAFAC class translation factor GTPase superfamily. Classic translation factor GTPase family. IF-2 subfamily.

The protein localises to the cytoplasm. In terms of biological role, one of the essential components for the initiation of protein synthesis. Protects formylmethionyl-tRNA from spontaneous hydrolysis and promotes its binding to the 30S ribosomal subunits. Also involved in the hydrolysis of GTP during the formation of the 70S ribosomal complex. This is Translation initiation factor IF-2 from Leptospira borgpetersenii serovar Hardjo-bovis (strain JB197).